The chain runs to 264 residues: Transcription factor bHLH52 (264 aa).

The bHLH domain maps to 134–183; that stretch reads RELSAQSIAARKRRRRITEKTQELGKLIPGSQKHNTAEMFNAAAKYVKFL.

Homodimer. In terms of tissue distribution, expressed constitutively in roots, leaves, stems, and flowers.

Its subcellular location is the nucleus. This is Transcription factor bHLH52 (BHLH52) from Arabidopsis thaliana (Mouse-ear cress).